We begin with the raw amino-acid sequence, 300 residues long: N-carbamoylputrescine amidase (300 aa).

Residues 8 to 266 enclose the CN hydrolase domain; that stretch reads VTVAALQFAC…EAVLVAQFDL (259 aa). The active-site Proton acceptor is Glu47. Catalysis depends on Lys120, which acts as the Proton donor. Catalysis depends on Cys157, which acts as the Nucleophile.

This sequence belongs to the carbon-nitrogen hydrolase superfamily. As to quaternary structure, homooctamer.

It catalyses the reaction N-carbamoylputrescine + H2O + 2 H(+) = putrescine + NH4(+) + CO2. The protein operates within amine and polyamine biosynthesis; putrescine biosynthesis via agmatine pathway; putrescine from N-carbamoylputrescine (amidase route): step 1/1. Functionally, involved in polyamine biosynthesis. This chain is N-carbamoylputrescine amidase (CPA), found in Solanum lycopersicum (Tomato).